The primary structure comprises 330 residues: AH receptor-interacting protein (330 aa).

The PPIase FKBP-type domain maps to 31 to 121 (GTKATFHFRT…KDPLEGQRHC (91 aa)). Ser-43 carries the phosphoserine modification. 3 TPR repeats span residues 179 to 212 (VPLIHQEGNRLYREGQVKEAAAKYYDAIACLKNL), 231 to 264 (TPLLLNYCQCKLVAQEYYEVLDHCSSILNKYDDN), and 265 to 298 (VKAYFKRGKAHAAVWNAQEAQADFAKVLELDPAL).

As to quaternary structure, interacts with RET in the pituitary gland; this interaction prevents the formation of the AIP-survivin complex.

Its subcellular location is the cytoplasm. In terms of biological role, may play a positive role in AHR-mediated (aromatic hydrocarbon receptor) signaling, possibly by influencing its receptivity for ligand and/or its nuclear targeting. This chain is AH receptor-interacting protein (Aip), found in Rattus norvegicus (Rat).